The chain runs to 952 residues: Glycine dehydrogenase (decarboxylating) (952 aa).

Lys696 is modified (N6-(pyridoxal phosphate)lysine).

This sequence belongs to the GcvP family. As to quaternary structure, the glycine cleavage system is composed of four proteins: P, T, L and H. Requires pyridoxal 5'-phosphate as cofactor.

The enzyme catalyses N(6)-[(R)-lipoyl]-L-lysyl-[glycine-cleavage complex H protein] + glycine + H(+) = N(6)-[(R)-S(8)-aminomethyldihydrolipoyl]-L-lysyl-[glycine-cleavage complex H protein] + CO2. Its function is as follows. The glycine cleavage system catalyzes the degradation of glycine. The P protein binds the alpha-amino group of glycine through its pyridoxal phosphate cofactor; CO(2) is released and the remaining methylamine moiety is then transferred to the lipoamide cofactor of the H protein. The chain is Glycine dehydrogenase (decarboxylating) from Pelagibacter ubique (strain HTCC1062).